The following is a 380-amino-acid chain: Putative zinc finger protein C02F5.12 (380 aa).

A disordered region spans residues 137-187 (NLDIPGTSSDIPSDPSSALKVPKKEVLDESEEILDQTSGSSSFSLNDSEQA). Polar residues-rich tracts occupy residues 142–152 (GTSSDIPSDPS) and 171–187 (DQTSGSSSFSLNDSEQA). Residues 271–294 (IPCKLCGFECTNVRRMRSHYAKAH) form a C2H2-type zinc finger.

It is found in the nucleus. The polypeptide is Putative zinc finger protein C02F5.12 (Caenorhabditis elegans).